We begin with the raw amino-acid sequence, 768 residues long: Ral guanine nucleotide dissociation stimulator-like 1 (768 aa).

Residues 65 to 196 (KIRTIKAGTL…RAQNLLEQFQ (132 aa)) form the N-terminal Ras-GEF domain. One can recognise a Ras-GEF domain in the interval 232-501 (SEDLVAEQLT…YALSCEIEAA (270 aa)). Ser520 is subject to Phosphoserine. The disordered stretch occupies residues 530–623 (PGSTPTKEQP…PPTCNNNPKI (94 aa)). 2 stretches are compositionally biased toward low complexity: residues 541–561 (SAAS…SCES) and 586–596 (ESSSSCSSIHS). Over residues 597–621 (MDTNSSGMSSLINPLSSPPTCNNNP) the composition is skewed to polar residues. The Ras-associating domain occupies 648–735 (DTCIIRISVE…FDFILRKKNS (88 aa)).

As to quaternary structure, interacts with Ras.

Its function is as follows. Probable guanine nucleotide exchange factor. This chain is Ral guanine nucleotide dissociation stimulator-like 1 (Rgl1), found in Mus musculus (Mouse).